The sequence spans 262 residues: MISTACWRDCMPQTVNKQAVAAAFGRAARSYNQHAELQRQCGERLLEHARPGNALRVLDAGCGTGWFSQRWRAGGHWVTALDLSEKMLQHARENQAADCYLPGDIEALPFADASFDRCWSNLAVQWCSSLPLALRELRRVTKPGGQVLFSTLTEGSLKEVSAAWQQIGRSAPLNRFASLPVIEQAAGSLALTLAGYTLTLAFPDVLSALRSLKGIGATHLHQGRSNGMISRRELQQLEQVWQRDARGCLLSYQLVSGVIERE.

This sequence belongs to the methyltransferase superfamily.

It carries out the reaction malonyl-[ACP] + S-adenosyl-L-methionine = malonyl-[ACP] methyl ester + S-adenosyl-L-homocysteine. The protein operates within cofactor biosynthesis; biotin biosynthesis. In terms of biological role, converts the free carboxyl group of a malonyl-thioester to its methyl ester by transfer of a methyl group from S-adenosyl-L-methionine (SAM). It allows to synthesize pimeloyl-ACP via the fatty acid synthetic pathway. This is Malonyl-[acyl-carrier protein] O-methyltransferase from Erwinia pyrifoliae (strain DSM 12163 / CIP 106111 / Ep16/96).